We begin with the raw amino-acid sequence, 908 residues long: MFGNLLTKIFGSRNDRTLKQLGKVVVKINALEAEYEKLSDEELKAKTAEFKARLEKGESLNELMAEAFATVREASKRVFEMRHFDVQLMGGMVLDSNRIAEMRTGEGKTLTATLPAYLNALTGKGVHVITVNDYLARRDAENNRPLFEFLGMSVGVNVAGLSHADKKAAYDADITYGTNNEFGFDYLRDNMAFSPNDRVQRPLHYALIDEVDSILIDEARTPLIISGAAEDSSELYMRVNKLIPSLIRQEKEDTEEFVGEGDYSIDEKARQVHMTERGQEKVEQLLTEAGLLAEGDSLYSAANISLLHHVNAALRAHTLFEKDVDYVVQNNEVVIVDEHTGRTMPGRRWSEGLHQAVEAKEGVRIQNENQTLASITFQNYFRLYEKLAGMTGTADTEAFEFQHIYGLDTVVVPTNRPMVRKDMPDLVYLTAREKYQAIIADIKDCRERGQPVLVGTVSIEQSELLSRLLNQDKIPHQVLNAKFHEKEAEIVAQAGRSGAVTVATNMAGRGTDIVLGGNWKSEIEALENPSEADIARIRADWEVRHNAVVEAGGLHILGTERHESRRIDNQLRGRSGRQGDPGSSRFYLSMEDNLMRIFASERVANMMKKLGMEEGEAIEHPWVTRAIENAQRKVEARNFDIRKQLLEFDDVANDQRQVVYAQRNELMDAESIEETIKNIQADVVDGVISQYIPPQSVEELWDVPGLEDRLAKEFGLQLPVQEWLDKEDDLHEETLRERIVDTWRQAYEAKEQMVGTPVLRQFEKAVMLQTLDGLWKEHLAAMDHLRQGIHLRGYAQKNPKQEYKRESFELFQQMLETLKHDVIAILSKVQVQAQSDVDEMEARRREEEARIQREYQHAEAESMASDNSELADMASHVPVVRDGEKVGRNDPCPCGSGKKYKQCHGKLT.

ATP is bound by residues Gln-87, 105 to 109 (GEGKT), and Asp-512. The interval 882–908 (DGEKVGRNDPCPCGSGKKYKQCHGKLT) is disordered. Positions 892, 894, 903, and 904 each coordinate Zn(2+). Basic residues predominate over residues 898–908 (KKYKQCHGKLT).

The protein belongs to the SecA family. Monomer and homodimer. Part of the essential Sec protein translocation apparatus which comprises SecA, SecYEG and auxiliary proteins SecDF-YajC and YidC. Requires Zn(2+) as cofactor.

It localises to the cell inner membrane. It is found in the cytoplasm. The enzyme catalyses ATP + H2O + cellular proteinSide 1 = ADP + phosphate + cellular proteinSide 2.. Its function is as follows. Part of the Sec protein translocase complex. Interacts with the SecYEG preprotein conducting channel. Has a central role in coupling the hydrolysis of ATP to the transfer of proteins into and across the cell membrane, serving both as a receptor for the preprotein-SecB complex and as an ATP-driven molecular motor driving the stepwise translocation of polypeptide chains across the membrane. In Shewanella amazonensis (strain ATCC BAA-1098 / SB2B), this protein is Protein translocase subunit SecA.